The primary structure comprises 335 residues: Holliday junction branch migration complex subunit RuvB (335 aa).

The interval 1 to 183 (MDERIISSET…FGVIDHLEFY (183 aa)) is large ATPase domain (RuvB-L). ATP-binding positions include L22, R23, G64, K67, T68, T69, 130–132 (EDY), R173, Y183, and R220. Position 68 (T68) interacts with Mg(2+). Positions 184–254 (TEEQLTEIVL…LAKEALTLLQ (71 aa)) are small ATPAse domain (RuvB-S). Residues 257–335 (PRGLDTIDQK…HLGISYEKEV (79 aa)) are head domain (RuvB-H). R293, R312, and R317 together coordinate DNA.

It belongs to the RuvB family. As to quaternary structure, homohexamer. Forms an RuvA(8)-RuvB(12)-Holliday junction (HJ) complex. HJ DNA is sandwiched between 2 RuvA tetramers; dsDNA enters through RuvA and exits via RuvB. An RuvB hexamer assembles on each DNA strand where it exits the tetramer. Each RuvB hexamer is contacted by two RuvA subunits (via domain III) on 2 adjacent RuvB subunits; this complex drives branch migration. In the full resolvosome a probable DNA-RuvA(4)-RuvB(12)-RuvC(2) complex forms which resolves the HJ.

The protein resides in the cytoplasm. The enzyme catalyses ATP + H2O = ADP + phosphate + H(+). Its function is as follows. The RuvA-RuvB-RuvC complex processes Holliday junction (HJ) DNA during genetic recombination and DNA repair, while the RuvA-RuvB complex plays an important role in the rescue of blocked DNA replication forks via replication fork reversal (RFR). RuvA specifically binds to HJ cruciform DNA, conferring on it an open structure. The RuvB hexamer acts as an ATP-dependent pump, pulling dsDNA into and through the RuvAB complex. RuvB forms 2 homohexamers on either side of HJ DNA bound by 1 or 2 RuvA tetramers; 4 subunits per hexamer contact DNA at a time. Coordinated motions by a converter formed by DNA-disengaged RuvB subunits stimulates ATP hydrolysis and nucleotide exchange. Immobilization of the converter enables RuvB to convert the ATP-contained energy into a lever motion, pulling 2 nucleotides of DNA out of the RuvA tetramer per ATP hydrolyzed, thus driving DNA branch migration. The RuvB motors rotate together with the DNA substrate, which together with the progressing nucleotide cycle form the mechanistic basis for DNA recombination by continuous HJ branch migration. Branch migration allows RuvC to scan DNA until it finds its consensus sequence, where it cleaves and resolves cruciform DNA. The sequence is that of Holliday junction branch migration complex subunit RuvB from Listeria monocytogenes serovar 1/2a (strain ATCC BAA-679 / EGD-e).